The sequence spans 363 residues: NAD(P)H-quinone oxidoreductase subunit 1, chloroplastic (363 aa).

Transmembrane regions (helical) follow at residues 27-47 (IWLF…VLVI), 98-118 (FSIG…VIPF), 127-147 (LSIG…GLLM), 248-268 (YSGI…LVSS), 300-320 (VFGT…FLFI), and 336-356 (LLNL…LLTT).

This sequence belongs to the complex I subunit 1 family. NDH is composed of at least 16 different subunits, 5 of which are encoded in the nucleus.

Its subcellular location is the plastid. The protein resides in the chloroplast thylakoid membrane. It carries out the reaction a plastoquinone + NADH + (n+1) H(+)(in) = a plastoquinol + NAD(+) + n H(+)(out). It catalyses the reaction a plastoquinone + NADPH + (n+1) H(+)(in) = a plastoquinol + NADP(+) + n H(+)(out). Functionally, NDH shuttles electrons from NAD(P)H:plastoquinone, via FMN and iron-sulfur (Fe-S) centers, to quinones in the photosynthetic chain and possibly in a chloroplast respiratory chain. The immediate electron acceptor for the enzyme in this species is believed to be plastoquinone. Couples the redox reaction to proton translocation, and thus conserves the redox energy in a proton gradient. This Amborella trichopoda protein is NAD(P)H-quinone oxidoreductase subunit 1, chloroplastic.